We begin with the raw amino-acid sequence, 288 residues long: Diaminopimelate epimerase (288 aa).

Asn-14 and Asn-67 together coordinate substrate. Catalysis depends on Cys-76, which acts as the Proton donor. Residues 77 to 78 (GN), Asn-166, Asn-199, and 217 to 218 (ER) contribute to the substrate site. The active-site Proton acceptor is Cys-226. 227–228 (GT) is a binding site for substrate.

This sequence belongs to the diaminopimelate epimerase family. In terms of assembly, homodimer.

It is found in the cytoplasm. The enzyme catalyses (2S,6S)-2,6-diaminopimelate = meso-2,6-diaminopimelate. It participates in amino-acid biosynthesis; L-lysine biosynthesis via DAP pathway; DL-2,6-diaminopimelate from LL-2,6-diaminopimelate: step 1/1. Its function is as follows. Catalyzes the stereoinversion of LL-2,6-diaminopimelate (L,L-DAP) to meso-diaminopimelate (meso-DAP), a precursor of L-lysine and an essential component of the bacterial peptidoglycan. The polypeptide is Diaminopimelate epimerase (Bacillus thuringiensis (strain Al Hakam)).